We begin with the raw amino-acid sequence, 469 residues long: GTPase Der (469 aa).

EngA-type G domains lie at 3–167 and 176–349; these read PTLV…PEEE and PKIA…AAAF. GTP-binding positions include 9–16, 56–60, 119–122, 182–189, 229–233, and 294–297; these read GRPNVGKS, DTGGL, NKAE, DTAGV, and NKWD. Residues 350 to 436 form the KH-like domain; it reads IKLSTPKLTR…RIQIKEDEGK (87 aa). The segment covering 432 to 443 has biased composition (basic and acidic residues); that stretch reads EDEGKNPFEGKK. Residues 432–469 form a disordered region; it reads EDEGKNPFEGKKRAPLSESEATRMRRKKRVRRKVYGAD. Positions 455–469 are enriched in basic residues; sequence MRRKKRVRRKVYGAD.

Belongs to the TRAFAC class TrmE-Era-EngA-EngB-Septin-like GTPase superfamily. EngA (Der) GTPase family. Associates with the 50S ribosomal subunit.

Functionally, GTPase that plays an essential role in the late steps of ribosome biogenesis. This is GTPase Der from Thiobacillus denitrificans (strain ATCC 25259 / T1).